A 293-amino-acid polypeptide reads, in one-letter code: Phosphatidylserine decarboxylase proenzyme (293 aa).

Active-site charge relay system; for autoendoproteolytic cleavage activity residues include aspartate 88, histidine 144, and serine 247. Catalysis depends on serine 247, which acts as the Schiff-base intermediate with substrate; via pyruvic acid; for decarboxylase activity. The residue at position 247 (serine 247) is a Pyruvic acid (Ser); by autocatalysis.

The protein belongs to the phosphatidylserine decarboxylase family. PSD-B subfamily. Prokaryotic type I sub-subfamily. Heterodimer of a large membrane-associated beta subunit and a small pyruvoyl-containing alpha subunit. It depends on pyruvate as a cofactor. Is synthesized initially as an inactive proenzyme. Formation of the active enzyme involves a self-maturation process in which the active site pyruvoyl group is generated from an internal serine residue via an autocatalytic post-translational modification. Two non-identical subunits are generated from the proenzyme in this reaction, and the pyruvate is formed at the N-terminus of the alpha chain, which is derived from the carboxyl end of the proenzyme. The autoendoproteolytic cleavage occurs by a canonical serine protease mechanism, in which the side chain hydroxyl group of the serine supplies its oxygen atom to form the C-terminus of the beta chain, while the remainder of the serine residue undergoes an oxidative deamination to produce ammonia and the pyruvoyl prosthetic group on the alpha chain. During this reaction, the Ser that is part of the protease active site of the proenzyme becomes the pyruvoyl prosthetic group, which constitutes an essential element of the active site of the mature decarboxylase.

The protein localises to the cell membrane. The catalysed reaction is a 1,2-diacyl-sn-glycero-3-phospho-L-serine + H(+) = a 1,2-diacyl-sn-glycero-3-phosphoethanolamine + CO2. The protein operates within phospholipid metabolism; phosphatidylethanolamine biosynthesis; phosphatidylethanolamine from CDP-diacylglycerol: step 2/2. In terms of biological role, catalyzes the formation of phosphatidylethanolamine (PtdEtn) from phosphatidylserine (PtdSer). This chain is Phosphatidylserine decarboxylase proenzyme, found in Xylella fastidiosa (strain M23).